A 658-amino-acid polypeptide reads, in one-letter code: tRNA 5-methylaminomethyl-2-thiouridine biosynthesis bifunctional protein MnmC (658 aa).

Positions 1–236 (MIPELPHAQL…KWEVLRGEFL (236 aa)) are tRNA (mnm(5)s(2)U34)-methyltransferase. The FAD-dependent cmnm(5)s(2)U34 oxidoreductase stretch occupies residues 265-658 (IGGGLAGCAS…ALRRLIRGKA (394 aa)).

In the N-terminal section; belongs to the methyltransferase superfamily. tRNA (mnm(5)s(2)U34)-methyltransferase family. It in the C-terminal section; belongs to the DAO family. The cofactor is FAD.

The protein resides in the cytoplasm. It catalyses the reaction 5-aminomethyl-2-thiouridine(34) in tRNA + S-adenosyl-L-methionine = 5-methylaminomethyl-2-thiouridine(34) in tRNA + S-adenosyl-L-homocysteine + H(+). Functionally, catalyzes the last two steps in the biosynthesis of 5-methylaminomethyl-2-thiouridine (mnm(5)s(2)U) at the wobble position (U34) in tRNA. Catalyzes the FAD-dependent demodification of cmnm(5)s(2)U34 to nm(5)s(2)U34, followed by the transfer of a methyl group from S-adenosyl-L-methionine to nm(5)s(2)U34, to form mnm(5)s(2)U34. In Pseudomonas fluorescens (strain ATCC BAA-477 / NRRL B-23932 / Pf-5), this protein is tRNA 5-methylaminomethyl-2-thiouridine biosynthesis bifunctional protein MnmC.